The sequence spans 187 residues: Large ribosomal subunit protein uL5 (187 aa).

This sequence belongs to the universal ribosomal protein uL5 family. As to quaternary structure, part of the 50S ribosomal subunit; part of the 5S rRNA/L5/L18/L25 subcomplex. Contacts the 5S rRNA and the P site tRNA. Forms a bridge to the 30S subunit in the 70S ribosome.

This is one of the proteins that bind and probably mediate the attachment of the 5S RNA into the large ribosomal subunit, where it forms part of the central protuberance. In the 70S ribosome it contacts protein S13 of the 30S subunit (bridge B1b), connecting the 2 subunits; this bridge is implicated in subunit movement. Contacts the P site tRNA; the 5S rRNA and some of its associated proteins might help stabilize positioning of ribosome-bound tRNAs. This chain is Large ribosomal subunit protein uL5, found in Roseobacter denitrificans (strain ATCC 33942 / OCh 114) (Erythrobacter sp. (strain OCh 114)).